The chain runs to 33 residues: uncharacterized protein (33 aa).

The Cytoplasmic segment spans residues 1-12 (MKENKVQQISHK). A helical transmembrane segment spans residues 13–33 (LINIVVFVAIVEYAYLFLHFY).

The protein localises to the cell inner membrane. This is an uncharacterized protein from Escherichia coli (strain K12).